The primary structure comprises 519 residues: Membrane-bound lytic murein transglycosylase F (519 aa).

A signal peptide spans 1–32; it reads MKKLKLNYLLIGVVTLLLAVALWPAIPWSGKA. A non-LT domain region spans residues 33–269; that stretch reads DNRIAAIQAR…RLEEKYLGHG (237 aa). The tract at residues 270–519 is LT domain; that stretch reads NDFDYVDTRS…PNTLSPVSPR (250 aa). Glu-314 is an active-site residue. The interval 495–519 is disordered; the sequence is PFSQAGAGGKTHSALPNTLSPVSPR. The span at 508-519 shows a compositional bias: polar residues; that stretch reads ALPNTLSPVSPR.

It in the N-terminal section; belongs to the bacterial solute-binding protein 3 family. In the C-terminal section; belongs to the transglycosylase Slt family.

It is found in the cell outer membrane. The catalysed reaction is Exolytic cleavage of the (1-&gt;4)-beta-glycosidic linkage between N-acetylmuramic acid (MurNAc) and N-acetylglucosamine (GlcNAc) residues in peptidoglycan, from either the reducing or the non-reducing ends of the peptidoglycan chains, with concomitant formation of a 1,6-anhydrobond in the MurNAc residue.. Functionally, murein-degrading enzyme that degrades murein glycan strands and insoluble, high-molecular weight murein sacculi, with the concomitant formation of a 1,6-anhydromuramoyl product. Lytic transglycosylases (LTs) play an integral role in the metabolism of the peptidoglycan (PG) sacculus. Their lytic action creates space within the PG sacculus to allow for its expansion as well as for the insertion of various structures such as secretion systems and flagella. The sequence is that of Membrane-bound lytic murein transglycosylase F from Cronobacter sakazakii (strain ATCC BAA-894) (Enterobacter sakazakii).